We begin with the raw amino-acid sequence, 355 residues long: Peptide chain release factor 1 (355 aa).

Gln-231 is modified (N5-methylglutamine).

Belongs to the prokaryotic/mitochondrial release factor family. Post-translationally, methylated by PrmC. Methylation increases the termination efficiency of RF1.

It localises to the cytoplasm. Functionally, peptide chain release factor 1 directs the termination of translation in response to the peptide chain termination codons UAG and UAA. This is Peptide chain release factor 1 from Wolinella succinogenes (strain ATCC 29543 / DSM 1740 / CCUG 13145 / JCM 31913 / LMG 7466 / NCTC 11488 / FDC 602W) (Vibrio succinogenes).